Reading from the N-terminus, the 364-residue chain is D-alanine--D-alanine ligase (364 aa).

One can recognise an ATP-grasp domain in the interval 146–352; that stretch reads KLCAMNAGIA…FAELVEKLLL (207 aa). 179 to 234 contacts ATP; that stretch reads TKRFDWPLFVKPASLGSSVGISKVRNAEELAAALENACGLDSKALVEAAISGREIE. Mg(2+) contacts are provided by Asp-305, Glu-319, and Asn-321.

The protein belongs to the D-alanine--D-alanine ligase family. Mg(2+) serves as cofactor. Requires Mn(2+) as cofactor.

The protein localises to the cytoplasm. It catalyses the reaction 2 D-alanine + ATP = D-alanyl-D-alanine + ADP + phosphate + H(+). Its pathway is cell wall biogenesis; peptidoglycan biosynthesis. Functionally, cell wall formation. The sequence is that of D-alanine--D-alanine ligase from Chlorobaculum tepidum (strain ATCC 49652 / DSM 12025 / NBRC 103806 / TLS) (Chlorobium tepidum).